Consider the following 240-residue polypeptide: Molybdate/tungstate import ATP-binding protein WtpC (240 aa).

Residues 2-227 (FLKVRAEKRL…KNGEVAEFLS (226 aa)) form the ABC transporter domain. 31–38 (GPTGAGKS) provides a ligand contact to ATP.

The protein belongs to the ABC transporter superfamily. Sulfate/tungstate importer (TC 3.A.1.6) family. In terms of assembly, the complex is composed of two ATP-binding proteins (WtpC), two transmembrane proteins (WtpB) and a solute-binding protein (WtpA).

Its subcellular location is the cell membrane. It carries out the reaction tungstate(in) + ATP + H2O = tungstate(out) + ADP + phosphate + H(+). Part of the ABC transporter complex WtpABC involved in molybdate/tungstate import. Responsible for energy coupling to the transport system. The protein is Molybdate/tungstate import ATP-binding protein WtpC (wtpC) of Archaeoglobus fulgidus (strain ATCC 49558 / DSM 4304 / JCM 9628 / NBRC 100126 / VC-16).